Reading from the N-terminus, the 456-residue chain is Tyrosine phenol-lyase (456 aa).

Lys-257 carries the N6-(pyridoxal phosphate)lysine modification.

The protein belongs to the beta-eliminating lyase family. In terms of assembly, homotetramer. Pyridoxal 5'-phosphate is required as a cofactor.

It catalyses the reaction L-tyrosine + H2O = phenol + pyruvate + NH4(+). The chain is Tyrosine phenol-lyase (tpl) from Citrobacter freundii.